Consider the following 204-residue polypeptide: Protein GrpE (204 aa).

Over residues 1-12 the composition is skewed to basic and acidic residues; the sequence is MSNQEKKMHEEE. The tract at residues 1–37 is disordered; that stretch reads MSNQEKKMHEEELQQQETVEADTEAEAEAVGTDADIE.

This sequence belongs to the GrpE family. In terms of assembly, homodimer.

The protein localises to the cytoplasm. Its function is as follows. Participates actively in the response to hyperosmotic and heat shock by preventing the aggregation of stress-denatured proteins, in association with DnaK and GrpE. It is the nucleotide exchange factor for DnaK and may function as a thermosensor. Unfolded proteins bind initially to DnaJ; upon interaction with the DnaJ-bound protein, DnaK hydrolyzes its bound ATP, resulting in the formation of a stable complex. GrpE releases ADP from DnaK; ATP binding to DnaK triggers the release of the substrate protein, thus completing the reaction cycle. Several rounds of ATP-dependent interactions between DnaJ, DnaK and GrpE are required for fully efficient folding. This chain is Protein GrpE, found in Vibrio proteolyticus (Aeromonas proteolytica).